The primary structure comprises 405 residues: Probable tRNA sulfurtransferase (405 aa).

A THUMP domain is found at 60-165 (DQVMARLSQV…REAIYLSTKT (106 aa)). ATP is bound by residues 183 to 184 (ML), 208 to 209 (HF), arginine 265, glycine 287, and glutamine 296.

This sequence belongs to the ThiI family.

It localises to the cytoplasm. The enzyme catalyses [ThiI sulfur-carrier protein]-S-sulfanyl-L-cysteine + a uridine in tRNA + 2 reduced [2Fe-2S]-[ferredoxin] + ATP + H(+) = [ThiI sulfur-carrier protein]-L-cysteine + a 4-thiouridine in tRNA + 2 oxidized [2Fe-2S]-[ferredoxin] + AMP + diphosphate. It catalyses the reaction [ThiS sulfur-carrier protein]-C-terminal Gly-Gly-AMP + S-sulfanyl-L-cysteinyl-[cysteine desulfurase] + AH2 = [ThiS sulfur-carrier protein]-C-terminal-Gly-aminoethanethioate + L-cysteinyl-[cysteine desulfurase] + A + AMP + 2 H(+). The protein operates within cofactor biosynthesis; thiamine diphosphate biosynthesis. Catalyzes the ATP-dependent transfer of a sulfur to tRNA to produce 4-thiouridine in position 8 of tRNAs, which functions as a near-UV photosensor. Also catalyzes the transfer of sulfur to the sulfur carrier protein ThiS, forming ThiS-thiocarboxylate. This is a step in the synthesis of thiazole, in the thiamine biosynthesis pathway. The sulfur is donated as persulfide by IscS. The sequence is that of Probable tRNA sulfurtransferase from Lacticaseibacillus paracasei (strain ATCC 334 / BCRC 17002 / CCUG 31169 / CIP 107868 / KCTC 3260 / NRRL B-441) (Lactobacillus paracasei).